A 62-amino-acid chain; its full sequence is U10-hottentoxin-Hj3a (62 aa).

Positions 1–22 (MQKLLIILILFCILKFNVDVEG) are cleaved as a signal peptide. Intrachain disulfides connect cysteine 28–cysteine 46, cysteine 33–cysteine 59, and cysteine 37–cysteine 61.

The protein belongs to the short scorpion toxin superfamily. Potassium channel inhibitor family. Alpha-KTx 23 subfamily. As to expression, expressed by the venom gland.

Its subcellular location is the secreted. May block potassium channels. This chain is U10-hottentoxin-Hj3a, found in Hottentotta judaicus (Black scorpion).